A 413-amino-acid polypeptide reads, in one-letter code: Peptidase T (413 aa).

Zn(2+) is bound at residue His81. The active site involves Asp83. Asp143 contacts Zn(2+). The Proton acceptor role is filled by Glu178. Residues Glu179, Asp201, and His383 each contribute to the Zn(2+) site.

It belongs to the peptidase M20B family. The cofactor is Zn(2+).

Its subcellular location is the cytoplasm. It carries out the reaction Release of the N-terminal residue from a tripeptide.. Functionally, cleaves the N-terminal amino acid of tripeptides. In Lactococcus lactis subsp. hordniae, this protein is Peptidase T.